An 828-amino-acid chain; its full sequence is Neurotrophin receptor-interacting factor 1 (828 aa).

Residues 14-85 (VKFEDVSLTF…QREIPQDTLP (72 aa)) enclose the KRAB 1 domain. Residue K15 forms a Glycyl lysine isopeptide (Lys-Gly) (interchain with G-Cter in ubiquitin) linkage. One can recognise an SCAN box domain in the interval 158 to 240 (RQKFRHFQYE…ALLENMTSVS (83 aa)). The region spanning 280–370 (VTFQDVAVDF…ESILEDGVKE (91 aa)) is the KRAB 2 domain. Disordered stretches follow at residues 328–355 (RELT…RNGT), 377–490 (NQVG…DPIT), and 575–611 (QKGY…LSTS). Over residues 345-355 (PNTNDLSRNGT) the composition is skewed to polar residues. Over residues 384 to 394 (EKGHPQKKFSE) the composition is skewed to basic and acidic residues. Over residues 418–433 (KYVKVKQKGTGKRKGR) the composition is skewed to basic residues. Residues 458 to 478 (RSGSTPVTHGSSIKKQQQGSE) are compositionally biased toward polar residues. The span at 589 to 599 (SWKHIKPHQKG) shows a compositional bias: basic residues. Residues 600–611 (SKGERVEELSTS) show a composition bias toward basic and acidic residues. 5 consecutive C2H2-type zinc fingers follow at residues 684–706 (CRCS…KKIH), 712–734 (YMCM…LRIH), 740–762 (FECS…LRTH), 768–790 (YHCE…ERTH), and 796–818 (YVCI…QKTH).

The protein belongs to the krueppel C2H2-type zinc-finger protein family. In terms of assembly, interacts with NGFR/p75(NTR). Interacts (via KRAB 1 domain) with TRAF6. Interacts (when ubiquitinated at Lys-15) with SQSTM1/p62. Ubiquitinated by TRAF6 at Lys-15 through 'Lys-63'-linked polyubiquitination. 'Lys-63'-linked polyubiquitination occurs in response to NGFR/p75(NTR) cleavage by gamma-secretase and promotes binding with the ICD cleavage product of NGFR/p75(NTR), followed by translocation into the nucleus and subsequent apoptosis. As to expression, ubiquitously expressed at low level. Expressed at higher level in testis.

The protein localises to the cytoplasm. Its subcellular location is the nucleus. Its function is as follows. Transcription regulator involved in NGFR/p75(NTR)-mediated apoptosis. Essential component of the NGFR/p75(NTR) apoptotic pathway: upon ligand-binding and subsequent cleavage of NGFR/p75(NTR), binds to the intracellular domain (ICD) cleavage product of NGFR/p75(NTR), translocates to the nucleus and induces apoptosis, possibly by regulating expression of key regulators of apoptosis. Induces NGFR/p75(NTR)-mediated apoptosis in retina and sympathetic neurons. May also regulate expression of neuronal cholesterol biosynthesis genes. Probably acts as a transcription repressor: specifically binds to the 3'-end of zinc-finger coding genes and recruiting chromatin-modifying proteins such as SETDB1 and TRIM28/KAP1, leading to transcription repression. The chain is Neurotrophin receptor-interacting factor 1 (Nrif1) from Mus musculus (Mouse).